The chain runs to 385 residues: Guanine nucleotide-binding protein alpha-5 subunit (385 aa).

Glycine 2 is lipidated: N-myristoyl glycine. Cysteine 6 carries the S-palmitoyl cysteine lipid modification. The G-alpha domain occupies 32–385 (RKIKMLLLGI…NKNIETLSLE (354 aa)). The interval 35–48 (KMLLLGISDSGKST) is G1 motif. Residues 40 to 47 (GISDSGKS), 174 to 180 (IHMRQTT), 199 to 203 (DVGGQ), 298 to 301 (NKID), and alanine 357 each bind GTP. 2 residues coordinate Mg(2+): serine 47 and threonine 180. Residues 172–180 (DLIHMRQTT) form a G2 motif region. The segment at 195 to 204 (IRLIDVGGQK) is G3 motif. The interval 294–301 (MLFLNKID) is G4 motif. Residues 355–360 (TQATIT) are G5 motif.

The protein belongs to the G-alpha family. As to quaternary structure, g proteins are composed of 3 units; alpha, beta and gamma. The alpha chain contains the guanine nucleotide binding site.

Functionally, guanine nucleotide-binding proteins (G proteins) are involved as modulators or transducers in various transmembrane signaling systems. This chain is Guanine nucleotide-binding protein alpha-5 subunit (gpa-5), found in Caenorhabditis briggsae.